The sequence spans 131 residues: NADPH-dependent 7-cyano-7-deazaguanine reductase (131 aa).

The active-site Thioimide intermediate is the Cys-41. The Proton donor role is filled by Asp-48. Substrate contacts are provided by residues 63–65 and 82–83; these read VEL and HE.

The protein belongs to the GTP cyclohydrolase I family. QueF type 1 subfamily.

It is found in the cytoplasm. It carries out the reaction 7-aminomethyl-7-carbaguanine + 2 NADP(+) = 7-cyano-7-deazaguanine + 2 NADPH + 3 H(+). Its pathway is tRNA modification; tRNA-queuosine biosynthesis. Catalyzes the NADPH-dependent reduction of 7-cyano-7-deazaguanine (preQ0) to 7-aminomethyl-7-deazaguanine (preQ1). The sequence is that of NADPH-dependent 7-cyano-7-deazaguanine reductase from Nitratiruptor sp. (strain SB155-2).